The sequence spans 380 residues: tRNA-specific 2-thiouridylase MnmA (380 aa).

Residues 12–19 and Met-38 contribute to the ATP site; that span reads GLSGGVDS. The segment at 108 to 110 is interaction with target base in tRNA; that stretch reads NPD. Cys-113 acts as the Nucleophile in catalysis. The cysteines at positions 113 and 210 are disulfide-linked. Gly-138 provides a ligand contact to ATP. Residues 160–162 are interaction with tRNA; sequence KDQ. Cys-210 (cysteine persulfide intermediate) is an active-site residue.

It belongs to the MnmA/TRMU family.

The protein resides in the cytoplasm. The enzyme catalyses S-sulfanyl-L-cysteinyl-[protein] + uridine(34) in tRNA + AH2 + ATP = 2-thiouridine(34) in tRNA + L-cysteinyl-[protein] + A + AMP + diphosphate + H(+). Its function is as follows. Catalyzes the 2-thiolation of uridine at the wobble position (U34) of tRNA, leading to the formation of s(2)U34. The protein is tRNA-specific 2-thiouridylase MnmA of Ureaplasma urealyticum serovar 10 (strain ATCC 33699 / Western).